The chain runs to 259 residues: tRNA (guanine-N(1)-)-methyltransferase (259 aa).

S-adenosyl-L-methionine contacts are provided by residues Gly117 and 137 to 142 (LGDFVL).

This sequence belongs to the RNA methyltransferase TrmD family. As to quaternary structure, homodimer.

It localises to the cytoplasm. The enzyme catalyses guanosine(37) in tRNA + S-adenosyl-L-methionine = N(1)-methylguanosine(37) in tRNA + S-adenosyl-L-homocysteine + H(+). Specifically methylates guanosine-37 in various tRNAs. The chain is tRNA (guanine-N(1)-)-methyltransferase from Polaromonas sp. (strain JS666 / ATCC BAA-500).